We begin with the raw amino-acid sequence, 296 residues long: Ribonuclease HIII (296 aa).

Positions 80-296 (LALIGSDEVG…NTKKAYQRLK (217 aa)) constitute an RNase H type-2 domain. A divalent metal cation-binding residues include aspartate 86, glutamate 87, and aspartate 191.

The protein belongs to the RNase HII family. RnhC subfamily. The cofactor is Mn(2+). It depends on Mg(2+) as a cofactor.

It localises to the cytoplasm. The enzyme catalyses Endonucleolytic cleavage to 5'-phosphomonoester.. In terms of biological role, endonuclease that specifically degrades the RNA of RNA-DNA hybrids. The sequence is that of Ribonuclease HIII from Streptococcus thermophilus (strain ATCC BAA-491 / LMD-9).